A 248-amino-acid chain; its full sequence is Uracil-DNA glycosylase (248 aa).

Catalysis depends on D85, which acts as the Proton acceptor.

The protein belongs to the uracil-DNA glycosylase (UDG) superfamily. UNG family.

It is found in the cytoplasm. It catalyses the reaction Hydrolyzes single-stranded DNA or mismatched double-stranded DNA and polynucleotides, releasing free uracil.. Its function is as follows. Excises uracil residues from the DNA which can arise as a result of misincorporation of dUMP residues by DNA polymerase or due to deamination of cytosine. This chain is Uracil-DNA glycosylase, found in Deinococcus deserti (strain DSM 17065 / CIP 109153 / LMG 22923 / VCD115).